Consider the following 409-residue polypeptide: Z-DNA-binding protein 1 (409 aa).

Z-binding domains lie at 8 to 70 (LGTG…SLGG) and 85 to 147 (SAAQ…TIYR). Glycyl lysine isopeptide (Lys-Gly) (interchain with G-Cter in ubiquitin) cross-links involve residues lysine 17 and lysine 43. The tract at residues 59–87 (SSPAPATWSLGGDGASGDGAPEIPEDSAA) is disordered. Short sequence motifs (RIP homotypic interaction motif (RHIM)) lie at residues 183-207 (NSLISISNSKAIQIGHGNVMSRQTI) and 241-265 (LIHLNKSMLRRVQLGHGNEMNLERD). Disordered stretches follow at residues 269–307 (HPIFSFSSSPPESTTTADPETAFNMQTPEPGPHPEGGTT) and 323–369 (GNNN…TPSD). Residues 270–290 (PIFSFSSSPPESTTTADPETA) are compositionally biased toward low complexity. Residues 337-351 (GTKESADSQELKEDT) show a composition bias toward basic and acidic residues.

As to quaternary structure, homodimer. Interacts (via RIP homotypic interaction motif) with RIPK3; leading to RIPK3 activation and necroptosis; interaction is enhanced by CASP6. Interacts (via RIP homotypic interaction motif) with RIPK1. Component of the AIM2 PANoptosome complex, a multiprotein complex that drives inflammatory cell death (PANoptosis). Ubiquitinated; polyubiquitinated following influenza A virus (IAV) infection. In terms of processing, phosphorylated.

It is found in the cytoplasm. The protein localises to the nucleus. With respect to regulation, ZBP1-dependent necroptosis is normally inhibited by RIPK1: RIPK1 inhibits the ZBP1-induced activation of RIPK3 via FADD-mediated recruitment of CASP8, which cleaves RIPK1 and limits TNF-induced necroptosis. Its function is as follows. Key innate sensor that recognizes and binds Z-RNA structures, which are produced by a number of viruses, such as herpesvirus, orthomyxovirus or flavivirus, and triggers different forms of cell death. ZBP1 acts as an essential mediator of pyroptosis, necroptosis and apoptosis (PANoptosis), an integral part of host defense against pathogens, by activating RIPK3, caspase-8 (CASP8), and the NLRP3 inflammasome. Key activator of necroptosis, a programmed cell death process in response to death-inducing TNF-alpha family members, via its ability to bind Z-RNA: once activated upon Z-RNA-binding, ZBP1 interacts and stimulates RIPK3 kinase, which phosphorylates and activates MLKL, triggering execution of programmed necrosis. In addition to TNF-induced necroptosis, necroptosis can also take place in the nucleus in response to orthomyxoviruses infection: ZBP1 recognizes and binds Z-RNA structures that are produced in infected nuclei by orthomyxoviruses, such as the influenza A virus (IAV), leading to ZBP1 activation, RIPK3 stimulation and subsequent MLKL phosphorylation, triggering disruption of the nuclear envelope and leakage of cellular DNA into the cytosol. ZBP1-dependent cell death in response to IAV infection promotes interleukin-1 alpha (IL1A) induction in an NLRP3-inflammasome-independent manner: IL1A expression is required for the optimal interleukin-1 beta (IL1B) production, and together, these cytokines promote infiltration of inflammatory neutrophils to the lung, leading to the formation of neutrophil extracellular traps. In addition to its direct role in driving necroptosis via its ability to sense Z-RNAs, also involved in PANoptosis triggered in response to bacterial infection: component of the AIM2 PANoptosome complex, a multiprotein complex that triggers PANoptosis. Also acts as the apical sensor of fungal infection responsible for activating PANoptosis. Involved in CASP8-mediated cell death via its interaction with RIPK1 but independently of its ability to sense Z-RNAs. In some cell types, also able to restrict viral replication by promoting cell death-independent responses. In response to flavivirus infection in neurons, promotes a cell death-independent pathway that restricts viral replication: together with RIPK3, promotes a death-independent transcriptional program that modifies the cellular metabolism via up-regulation expression of the enzyme ACOD1/IRG1 and production of the metabolite itaconate. Itaconate inhibits the activity of succinate dehydrogenase, generating a metabolic state in neurons that suppresses replication of viral genomes. This Rattus norvegicus (Rat) protein is Z-DNA-binding protein 1.